We begin with the raw amino-acid sequence, 545 residues long: Sulfite oxidase, mitochondrial (545 aa).

The N-terminal 79 residues, 1-79 (MLLLHRAVVL…YQDHRCRAAQ (79 aa)), are a transit peptide targeting the mitochondrion. The Cytochrome b5 heme-binding domain maps to 82-161 (TRIYTKEEVS…LAQYKVGELN (80 aa)). Histidine 118 provides a ligand contact to heme b. Serine 123 carries the phosphoserine modification. Positions 143, 145, and 147 each coordinate heme b. Residues 165–174 (KVAPTVETSD) form a hinge region. A moco domain region spans residues 175-401 (PYADDPVRHP…YSHWQRRDYK (227 aa)). Mo-molybdopterin contacts are provided by residues 215–219 (FTRNH), cysteine 264, aspartate 322, histidine 361, arginine 366, and 377–379 (HVK). A homodimerization region spans residues 402–538 (GFSPSVDWDT…RGVLSNAWHR (137 aa)).

Homodimer. Heme b serves as cofactor. The cofactor is Mo-molybdopterin.

The protein localises to the mitochondrion intermembrane space. It catalyses the reaction sulfite + O2 + H2O = sulfate + H2O2. The protein operates within energy metabolism; sulfur metabolism. Functionally, catalyzes the oxidation of sulfite to sulfate, the terminal reaction in the oxidative degradation of sulfur-containing amino acids. This is Sulfite oxidase, mitochondrial (SUOX) from Macaca fascicularis (Crab-eating macaque).